A 314-amino-acid polypeptide reads, in one-letter code: Regulator of microtubule dynamics protein 1 (314 aa).

K165 carries the N6-succinyllysine modification. 2 TPR repeats span residues 168 to 204 (AICLSDVGDYEGIKAKIANAYIIKEHFEKAIELNPKD) and 222 to 258 (PWYQRRIAKMLFATPPSSTYEKALGYFHRAEQVDPNF).

This sequence belongs to the RMDN family. As to quaternary structure, interacts with microtubules.

The protein resides in the cytoplasm. Its subcellular location is the cytoskeleton. It is found in the spindle. It localises to the spindle pole. This is Regulator of microtubule dynamics protein 1 (RMDN1) from Homo sapiens (Human).